The following is a 18562-amino-acid chain: Titin homolog (18562 aa).

The Ig-like 1 domain occupies 90-176; it reads PKFIQVIKAY…GVSTSYGYIT (87 aa). The tract at residues 384 to 404 is disordered; sequence RFHPQPPKPPRAGTSRRFLPE. Ig-like domains follow at residues 406–493, 821–913, 943–1038, and 1135–1225; these read PKFV…TQVT, PKIV…AFIN, PKFI…LTIS, and PRFE…LTVD. Cys842 and Cys897 are oxidised to a cystine. The disordered stretch occupies residues 1336 to 1360; the sequence is LPPVQKSMSVQEEKASSQRTPSPMN. The 84-residue stretch at 1679 to 1762 folds into the Ig-like 6 domain; it reads PKFLRKLVNC…ASNVAGTTFS (84 aa). Residues Cys1700 and Cys1751 are joined by a disulfide bond. 3 coiled-coil regions span residues 1766–1786, 2011–2038, and 2065–2085; these read LKLS…SEIK, QSLD…ERTS, and ISDQ…ALQE. The tract at residues 2155–2177 is disordered; that stretch reads RKGSDKDKRKATRIKRVPSAHSA. The span at 2163 to 2172 shows a compositional bias: basic residues; that stretch reads RKATRIKRVP. A coiled-coil region spans residues 2205–2231; that stretch reads LKQNEEAKEIQELFVKIEKEINTIAEL. Disordered regions lie at residues 2298-2459 and 2614-2637; these read IIGI…TADA and KSSL…EVTA. The segment covering 2309–2323 has biased composition (low complexity); sequence RRPSSTPRGSTRSSN. A compositionally biased stretch (polar residues) spans 2324 to 2341; that stretch reads LTTSQDSQATTKMTVSSE. The stretch at 2606–2630 forms a coiled coil; sequence LMQTLASEKSSLKAAEEDEKEGEEE. Residues 2621-2636 show a composition bias toward acidic residues; the sequence is EEDEKEGEEEGEEEVT. Ig-like domains are found at residues 3095–3177 and 3179–3264; these read KEVM…SGLY and TERS…SFVS. A disordered region spans residues 3362–3692; sequence EVPKVAEPSE…NAEAQKVVDS (331 aa). Acidic residues predominate over residues 3655-3665; the sequence is SEEETPLEETN. Ig-like domains are found at residues 3789 to 3878, 3897 to 3985, and 4038 to 4125; these read PVFT…CEIV, PHFV…CTID, and PPYF…CVLT. Intrachain disulfides connect Cys3919/Cys3969 and Cys4059/Cys4109. Disordered regions lie at residues 4553–4599, 4634–4699, 4750–4814, 4826–4855, 4912–4931, 4950–4969, 4989–5216, 5267–5294, 5306–5325, 5345–5372, 5428–6101, 6127–6157, 6214–6900, and 6930–8453; these read QSRE…SAPT, TVEP…EIVE, GSTA…TSEV, PVPE…EVQP, STAA…VESK, PETS…PVES, PETS…EILE, GSTA…EVEP, PETS…SVES, PETS…EVEP, GSTA…VEPT, VQVP…EVQP, STAA…ETSE, and APVE…DDKL. Basic and acidic residues predominate over residues 4555-4577; that stretch reads RELDNTERNFTVNKEKDESKKPS. 56 PVET repeats span residues 4599–4626, 4627–4665, 4666–4704, 4755–4787, 4788–4826, 4827–4865, 4917–4948, 4949–4987, 4988–5026, 5027–5065, 5066–5104, 5105–5143, 5144–5182, 5183–5221, 5273–5304, 5305–5343, 5344–5382, 5434–5465, 5466–5504, 5505–5543, 5544–5582, 5583–5621, 5622–5660, 5661–5699, 5700–5738, 5739–5777, 5778–5816, 5817–5855, 5856–5894, 5895–5933, 5934–5972, 5973–6011, 6012–6050, 6051–6089, 6090–6128, 6129–6167, 6219–6250, 6251–6289, 6290–6328, 6329–6367, 6368–6406, 6407–6445, 6446–6484, 6485–6523, 6524–6562, 6563–6601, 6602–6640, 6641–6679, 6680–6718, 6719–6757, 6758–6796, 6797–6835, 6836–6874, 6875–6913, 6914–6952, and 6953–6991; these read TVEK…KDVP, VPET…KDVP, VPET…KDVT, PAQE…KDVP, AQEP…KDVP, VPET…KVVP, VPET…KDVS, VPET…KDVQ, AHEP…KDVP, VPET…KDLP, VPET…KDVA, VPEA…KDVP, and VPEA…KLKK. Basic and acidic residues-rich tracts occupy residues 4638–4651 and 4677–4691; these read TVEK…KETS and TVEK…EKSE. A compositionally biased stretch (basic and acidic residues) spans 4960–4969; sequence TVEKLKPVES. The span at 5038–5051 shows a compositional bias: basic and acidic residues; it reads TVEKLKPVESKETS. 2 stretches are compositionally biased toward basic and acidic residues: residues 5116–5129 and 5155–5168; these read TVEK…KETS. Positions 5212–5235 form a coiled coil; sequence AEILEQKDVTCEEEIKELLTEVEV. The span at 5316 to 5325 shows a compositional bias: basic and acidic residues; the sequence is TVEKLKSVES. 2 stretches are compositionally biased toward basic and acidic residues: residues 5477 to 5490 and 5516 to 5529; these read TVEK…KETS. 6 stretches are compositionally biased toward basic and acidic residues: residues 6690-6704, 6729-6743, 6768-6782, 6807-6821, 6846-6860, and 6885-6899; these read PTKE…KETS. Basic and acidic residues-rich tracts occupy residues 6972–7606, 7613–7630, 7637–8062, and 8069–8453; these read ESKE…DNFK, LQKE…DNFK, and LQKE…DDKL. The stretch at 6984 to 7812 forms a coiled coil; sequence QADAKLKKEK…DKLKQETDAK (829 aa). 96 BLUE repeats span residues 6992–6996, 6997–7012, 7013–7028, 7029–7044, 7045–7060, 7061–7076, 7077–7092, 7093–7108, 7109–7124, 7125–7140, 7141–7156, 7157–7172, 7173–7188, 7189–7204, 7205–7220, 7221–7236, 7237–7252, 7253–7268, 7269–7284, 7285–7300, 7301–7316, 7317–7332, 7333–7348, 7349–7364, 7365–7380, 7381–7396, 7397–7412, 7413–7428, 7429–7444, 7445–7460, 7461–7476, 7477–7492, 7493–7508, 7509–7524, 7525–7540, 7541–7556, 7557–7572, 7573–7588, 7589–7604, 7605–7620, 7621–7628, 7629–7644, 7645–7652, 7653–7668, 7669–7684, 7685–7700, 7701–7716, 7717–7732, 7733–7748, 7749–7764, 7765–7772, 7773–7788, 7789–7804, 7805–7820, 7821–7836, 7837–7852, 7853–7868, 7869–7884, 7885–7900, 7901–7916, 7917–7932, 7933–7948, 7949–7964, 7965–7980, 7981–7996, 7997–8012, 8013–8028, 8029–8044, 8045–8060, 8061–8076, 8077–8084, 8085–8100, 8101–8116, 8117–8132, 8133–8148, 8149–8164, 8165–8180, 8181–8196, 8197–8212, 8213–8228, 8229–8244, 8245–8260, 8261–8276, 8277–8292, 8293–8308, 8309–8324, 8325–8340, 8341–8356, 8357–8371, 8373–8388, 8389–8404, 8405–8420, 8421–8436, 8437–8452, 8453–8468, and 8469–8484; these read EKDDK, HKQE…NDDK, LKQE…NDDK, LKQE…KHDK, LKQE…KDDK, LKQD…KDDK, LKHE…KDDK, LKQE…KDDR, LKKD…KDDK, LKHE…KDDN, FKQE…KDDK, LKQEKDDN, LKQEKDDK, LKQEKNDK, LKQE…KDNK, LKQE…KDDN, LKQE…EKDD, and LKQE…KGDK. A coiled-coil region spans residues 7876–8273; the sequence is KLKKEKDNKL…EADAKLKKDK (398 aa). A coiled-coil region spans residues 8316 to 8490; sequence KLKKEKDNKL…KGDKLKLEDQ (175 aa). The span at 8599–8611 shows a compositional bias: basic residues; the sequence is KHLKKKKKHHKKE. The segment at 8599–8626 is disordered; that stretch reads KHLKKKKKHHKKEKIAVKETEQDEKTVS. Positions 8612–8626 are enriched in basic and acidic residues; that stretch reads KIAVKETEQDEKTVS. The Fibronectin type-III 1 domain occupies 8950 to 9041; sequence KPRKAQLVAL…EIIEVNTLDY (92 aa). Disordered stretches follow at residues 9079–9104, 9147–9436, 9481–9609, 9702–10224, 10239–10274, 10539–11018, 11030–11111, 11123–11213, 11225–11387, 11420–11592, 11624–11825, 11872–11955, 11996–12054, 12397–12418, 12537–12974, 13026–13045, 13065–13261, 13283–13514, 13553–13574, and 13594–13874; these read IEEH…LDSE, VQKI…AAAE, EEQS…ETES, ADAV…ESRI, ESDD…EDSP, QSAP…DSFT, EDAV…QKDQ, KKLA…QDKT, AKTT…SLTS, KGLN…NPEL, LTKK…SDNL, LSAH…TSLS, TNLI…LQKN, GRRV…RKKR, EESR…PAES, EAAK…TEVV, AAEA…LNDK, QAQA…EQLK, EEKQ…KLKL, and EKLA…RRTG. The span at 9084–9093 shows a compositional bias: basic residues; it reads KLKKKSKKSK. 2 stretches are compositionally biased toward basic and acidic residues: residues 9172–9184 and 9191–9202; these read VKKD…KKSL and TKKEIQGKPEKK. A compositionally biased stretch (polar residues) spans 9213 to 9231; it reads SSISETSETLTKDLTQTKQ. A compositionally biased stretch (basic and acidic residues) spans 9232-9267; sequence SEPEPAKRTTETSVQDEVKRKTETTSKSKQTTEEHP. Over residues 9273 to 9283 the composition is skewed to low complexity; that stretch reads SDSSISSTSDA. Over residues 9295 to 9332 the composition is skewed to basic and acidic residues; the sequence is EAQKVTEKPETAKLESKSKMTEDTTKESDNKETVDEKP. The segment covering 9346-9359 has biased composition (low complexity); the sequence is STISETSETSAVES. Positions 9371–9510 form a coiled coil; the sequence is AAVDKEKKQK…QTKAKAAEKQ (140 aa). 2 stretches are compositionally biased toward basic and acidic residues: residues 9373-9436 and 9481-9521; these read VDKE…AAAE and EEQS…KSNK. Low complexity predominate over residues 9547-9558; sequence SSISQKSDTSKT. A coiled-coil region spans residues 9577–9749; the sequence is TSKQKETDKK…QTVEEQAKLD (173 aa). Composition is skewed to basic and acidic residues over residues 9578–9609 and 9702–9783; these read SKQK…ETES and ADAV…DEKP. Polar residues predominate over residues 9798 to 9809; the sequence is SISQKSVTSKTV. Composition is skewed to basic and acidic residues over residues 9819–10004, 10040–10149, and 10162–10196; these read ETQK…DEKP, ETQK…KSEN, and VKSE…EPKE. Coiled-coil stretches lie at residues 9822–9995 and 10046–10129; these read KVAD…TEEA and EADK…TSKK. The span at 10197–10206 shows a compositional bias: basic residues; sequence KKKIIKKKKD. Basic and acidic residues predominate over residues 10207 to 10224; that stretch reads TTKPQEASKELSSDESRI. Positions 10239 to 10250 are enriched in polar residues; sequence ESDDLSTASTIK. One can recognise a Fibronectin type-III 2 domain in the interval 10461–10553; sequence KPTSLQVTST…DTIEATTQAE (93 aa). Positions 10566-10609 are enriched in basic and acidic residues; sequence EKVKEPVSKKPENTKESEGHKKRDRKESEDHDENNLGKSGKDEF. The segment covering 10612–10637 has biased composition (polar residues); it reads SGESGTSNQNEESAQLNTSFTSTEQH. Residues 10663–10680 show a composition bias toward acidic residues; the sequence is IDADVVEVEYDEQGDDIP. Over residues 10707–10716 the composition is skewed to basic and acidic residues; the sequence is MAEKDSDAME. Polar residues predominate over residues 10779–10790; sequence ADQTGMSIQDLN. 2 stretches are compositionally biased toward basic and acidic residues: residues 10840–10852 and 10863–10884; these read QLDK…DDKM and KKPE…KESD. Residues 10961–10975 show a composition bias toward polar residues; sequence LSTSEQVENASQNLG. Composition is skewed to basic and acidic residues over residues 10999–11009, 11045–11055, and 11076–11089; these read IHGEAESKLGE, SAEKTSLEVRD, and SNRD…RDLN. A coiled-coil region spans residues 11018–11064; it reads TLQDLYEELKAKEDAVEAGAETSNADQSAEKTSLEVRDMKKKMKKKQ. A compositionally biased stretch (polar residues) spans 11090 to 11108; that stretch reads TQHSNQTGEDESSTFNFGQ. A compositionally biased stretch (basic and acidic residues) spans 11159 to 11173; sequence KKGEENEKTKFEAKH. Positions 11174–11187 are enriched in low complexity; sequence LGSSSASDSLAEST. Basic and acidic residues-rich tracts occupy residues 11195–11211, 11271–11280, and 11295–11318; these read KGEV…KNQD, IPDKNRDSDK, and ESAE…EKTL. A compositionally biased stretch (polar residues) spans 11374 to 11387; it reads SKVTTSFADESLTS. Composition is skewed to basic and acidic residues over residues 11440 to 11464 and 11472 to 11485; these read KVKD…KDQK and GSKD…EEKT. Positions 11503-11515 are enriched in polar residues; the sequence is MTDQKNVQESQYA. Composition is skewed to basic and acidic residues over residues 11624–11635, 11645–11669, and 11722–11735; these read LTKKQDENDAKK, AKKD…DSRE, and VSEK…EKTV. The segment covering 11754–11767 has biased composition (polar residues); it reads ESLNASSALSTTDV. Basic and acidic residues predominate over residues 11916 to 11937; it reads AEDKYVESRKKTTLKKKPEQKQ. A coiled-coil region spans residues 12408 to 12428; the sequence is ELDDAKKRKKRRIKRVVERRN. Positions 12432–12547 constitute an Ig-like 12 domain; sequence PRLTQLIPPR…ESRDDDKSVD (116 aa). 3 stretches are compositionally biased toward basic and acidic residues: residues 12537–12547, 12555–12567, and 12609–12689; these read EESRDDDKSVD, LEEK…DKSK, and VGAK…KKDA. A compositionally biased stretch (low complexity) spans 12690–12701; that stretch reads SQPSSSKESSPP. Positions 12729 to 12740 are enriched in polar residues; it reads TMHSETNITTTI. 3 stretches are compositionally biased toward basic and acidic residues: residues 12766–12839, 12852–12865, and 12889–12940; these read ESAK…KNKS, ETKK…EVPK, and PADD…DDKS. A coiled-coil region spans residues 12797–12828; sequence KKSEKKDEVTAEKQSTEALIESKKKEVDESKI. The stretch at 12980–13103 forms a coiled coil; it reads AEVNKAKKQK…LKLEEESAAK (124 aa). Composition is skewed to basic and acidic residues over residues 13065 to 13124, 13133 to 13145, 13176 to 13191, 13203 to 13261, 13283 to 13327, 13337 to 13354, and 13361 to 13416; these read AAEA…KAGE, PTSK…KDVG, TDSE…DEPT, EADK…LNDK, QAQA…EKQA, AVKK…EANK, and LKIE…DEKP. The stretch at 13237–13380 forms a coiled coil; sequence LDAQEKIKKV…SKQTVEEQAK (144 aa). Polar residues predominate over residues 13431 to 13442; sequence SISQKSETSKTV. Basic and acidic residues predominate over residues 13452-13514; the sequence is ETQKVADAAR…KQKEKDEQLK (63 aa). Residues 13455 to 13628 adopt a coiled-coil conformation; it reads KVADAARKQK…ETKSKQTEEA (174 aa). The span at 13594–13637 shows a compositional bias: basic and acidic residues; the sequence is EKLAQEQSRLEDEAKKSAEKQKLESETKSKQTEEAPKESVDEKP. The span at 13651 to 13662 shows a compositional bias: low complexity; that stretch reads SSISQKSKSAKS. Residues 13684–13696 show a composition bias toward polar residues; the sequence is KVEQSPDESTSAT. A compositionally biased stretch (basic and acidic residues) spans 13697–13735; that stretch reads IKRDPAQKTEEISKQDDGDEKKTTTDGKPPKPEDSEATP. Positions 13747–13760 are enriched in low complexity; sequence SDSVASDASLADVS. Over residues 13761-13770 the composition is skewed to basic and acidic residues; the sequence is KLSDDVEEKP. The segment covering 13784-13793 has biased composition (polar residues); the sequence is SVISETSSVD. Composition is skewed to basic and acidic residues over residues 13795-13808 and 13824-13843; these read IKPE…EKAE and SEPK…DMMT. Residues 13963–14036 enclose the Ig-like 13 domain; the sequence is PVDFVKYLPR…RAKYEDSGKY (74 aa). Fibronectin type-III domains follow at residues 14153 to 14247, 14253 to 14348, and 14350 to 14448; these read APGD…TGSP, VEFP…TVEG, and VPEI…VLAD. 3 consecutive Ig-like domains span residues 14451 to 14542, 14550 to 14634, and 14638 to 14727; these read PRVL…VGIS, SSFS…VIVN, and PHIL…LVFE. A disulfide bridge links Cys14568 with Cys14618. 2 consecutive Fibronectin type-III domains span residues 14826-14920 and 14937-15027; these read APCD…TLES and ILRT…LVPG. A disordered region spans residues 15011 to 15180; sequence VSSPSEETNP…TGKETTEKKK (170 aa). Basic and acidic residues-rich tracts occupy residues 15034–15060 and 15085–15117; these read KTEK…EKQV and KVAE…ESRR. The span at 15118 to 15132 shows a compositional bias: polar residues; sequence GSLQASSDNESVTTT. The span at 15133–15177 shows a compositional bias: basic and acidic residues; the sequence is SEKRSEAELEKNSEKSAEKKSTSADLEAADKAETEKSETGKETTE. 2 consecutive Ig-like domains span residues 15180–15274 and 15283–15371; these read KKVV…VSIA and PKVE…IALR. 2 consecutive Fibronectin type-III domains span residues 15383 to 15475 and 15503 to 15596; these read PTGP…LKKK and QIGK…TTES. The interval 15470-15503 is disordered; that stretch reads TTLKKKEETGKQKSEKSESDEKKSESDKVSELKQ. Over residues 15473–15503 the composition is skewed to basic and acidic residues; the sequence is KKKEETGKQKSEKSESDEKKSESDKVSELKQ. 2 consecutive Ig-like domains span residues 15599-15687 and 15692-15786; these read PAFT…CKLT and PEIN…IQVT. The Fibronectin type-III 10 domain maps to 15791–15883; the sequence is APGKPAVEDQ…DESELVVVKN (93 aa). Residues 15934–16189 enclose the Protein kinase domain; that stretch reads YIIHEELGKG…VQDALRHPWI (256 aa). Residues 15940–15948 and Lys15963 contribute to the ATP site; that span reads LGKGAYGTV. The active-site Proton acceptor is the Asp16055. The segment at 16206-16264 is autoinhibitory domain; sequence KMQPKLDKSGVPARQKRNFLSLKRWSDDLLPIGRLAKRGAIFRRLTMDGVFERNIAFDT. Ig-like domains follow at residues 16268–16358, 16500–16575, 16605–16692, and 16705–16789; these read PSVK…AKLS, GKQL…VAKN, PRFR…FSVV, and PKFL…KDFT. 4 cysteine pairs are disulfide-bonded: Cys16290/Cys16342, Cys16508/Cys16571, Cys16627/Cys16677, and Cys16726/Cys16778. Residues 16805-16827 form a disordered region; sequence LTPVRSRSRSRSRSPSVVGGEIQ. Ig-like domains are found at residues 16829–16918, 16932–17025, and 17037–17126; these read PPVV…AIVV, PTFV…LTIS, and PYFI…TEVS. A disordered region spans residues 17121 to 17169; it reads QNTEVSVTKSKEVKEKKEKKKVEKKDEGKKKPGRPGLPRPSGASKTEQV. The span at 17129–17150 shows a compositional bias: basic and acidic residues; sequence KSKEVKEKKEKKKVEKKDEGKK. In terms of domain architecture, Fibronectin type-III 11 spans 17154 to 17245; it reads RPGLPRPSGA…MTSTLKTASV (92 aa). Ig-like domains are found at residues 17249–17336, 17358–17447, 17457–17548, 17570–17661, 17676–17765, 17782–17873, 18008–18097, 18121–18213, 18224–18316, 18329–18417, and 18429–18519; these read PQFT…CQVT, PTLQ…CNVA, PSFS…VMIA, PRFT…TQVI, PKFT…QATT, PRFV…LNVS, PKFM…SEID, PNFI…LQVS, PPLF…MQLD, PRVF…LELT, and PKFN…MILS. Cystine bridges form between Cys17379–Cys17431 and Cys17478–Cys17530. A disulfide bond links Cys17697 and Cys17754. An intrachain disulfide couples Cys18143 to Cys18195.

The protein belongs to the protein kinase superfamily. CAMK Ser/Thr protein kinase family. In terms of assembly, interacts (via C-terminus) with myosin. Interacts with actin. Mg(2+) is required as a cofactor. As to expression, expression is restricted to body wall, enteric and vulval muscles.

The protein localises to the cytoplasm. The protein resides in the myofibril. It localises to the sarcomere. Its subcellular location is the a band. It is found in the i band. The protein localises to the nucleus membrane. The enzyme catalyses L-seryl-[protein] + ATP = O-phospho-L-seryl-[protein] + ADP + H(+). The catalysed reaction is L-threonyl-[protein] + ATP = O-phospho-L-threonyl-[protein] + ADP + H(+). Serine/threonine-protein kinase. Key component in the assembly and functioning of muscles. By providing connections at the level of individual microfilaments, it contributes to the fine balance of forces between the two halves of the sarcomere. The size and extensibility of the cross-links are the main determinants of sarcomere extensibility properties of muscle. In non-muscle cells, seems to play a role in chromosome condensation and chromosome segregation during mitosis. Might link the lamina network to chromatin or nuclear actin, or both during interphase. This is Titin homolog from Caenorhabditis elegans.